The sequence spans 166 residues: KH homology domain-containing protein 1A (166 aa).

The region spanning 19–78 (PLVFDMEEDKEDYIFGPHDEYLHTLEVHSNTLIQLERWFTPTGQTRVTVVGPLKARLWVM) is the KH; atypical domain.

Belongs to the KHDC1 family.

It localises to the cytoplasm. Has pro-apoptotic activity. This chain is KH homology domain-containing protein 1A (Khdc1a), found in Mus musculus (Mouse).